Consider the following 360-residue polypeptide: Holliday junction branch migration complex subunit RuvB (360 aa).

The segment at 4-196 (HEEDLDQAEE…FGFTAHLEFY (193 aa)) is large ATPase domain (RuvB-L). Residues leucine 35, arginine 36, glycine 77, lysine 80, threonine 81, threonine 82, 143–145 (EDF), arginine 186, tyrosine 196, and arginine 233 contribute to the ATP site. Residue threonine 81 participates in Mg(2+) binding. The segment at 197–267 (EPDELDLIVQ…VAQDALDLYE (71 aa)) is small ATPAse domain (RuvB-S). The segment at 270 to 360 (QLGLDRLDRG…PESDPPLFED (91 aa)) is head domain (RuvB-H). Residues arginine 306, arginine 325, and arginine 330 each coordinate DNA.

It belongs to the RuvB family. As to quaternary structure, homohexamer. Forms an RuvA(8)-RuvB(12)-Holliday junction (HJ) complex. HJ DNA is sandwiched between 2 RuvA tetramers; dsDNA enters through RuvA and exits via RuvB. An RuvB hexamer assembles on each DNA strand where it exits the tetramer. Each RuvB hexamer is contacted by two RuvA subunits (via domain III) on 2 adjacent RuvB subunits; this complex drives branch migration. In the full resolvosome a probable DNA-RuvA(4)-RuvB(12)-RuvC(2) complex forms which resolves the HJ.

Its subcellular location is the cytoplasm. It carries out the reaction ATP + H2O = ADP + phosphate + H(+). Functionally, the RuvA-RuvB-RuvC complex processes Holliday junction (HJ) DNA during genetic recombination and DNA repair, while the RuvA-RuvB complex plays an important role in the rescue of blocked DNA replication forks via replication fork reversal (RFR). RuvA specifically binds to HJ cruciform DNA, conferring on it an open structure. The RuvB hexamer acts as an ATP-dependent pump, pulling dsDNA into and through the RuvAB complex. RuvB forms 2 homohexamers on either side of HJ DNA bound by 1 or 2 RuvA tetramers; 4 subunits per hexamer contact DNA at a time. Coordinated motions by a converter formed by DNA-disengaged RuvB subunits stimulates ATP hydrolysis and nucleotide exchange. Immobilization of the converter enables RuvB to convert the ATP-contained energy into a lever motion, pulling 2 nucleotides of DNA out of the RuvA tetramer per ATP hydrolyzed, thus driving DNA branch migration. The RuvB motors rotate together with the DNA substrate, which together with the progressing nucleotide cycle form the mechanistic basis for DNA recombination by continuous HJ branch migration. Branch migration allows RuvC to scan DNA until it finds its consensus sequence, where it cleaves and resolves cruciform DNA. This is Holliday junction branch migration complex subunit RuvB from Nocardioides sp. (strain ATCC BAA-499 / JS614).